The chain runs to 466 residues: MTLKASEGESGGSMHTALSDLYLEHLLQKRSRPEAVSHPLNTVTEDMYTNGSPAPGSPAQVKGQEVRKVRLIQIEKVTEEPMGITLKLNEKQSCTVARILHGGMIHRQGSLHVGDEILEINGTNVTNHSVDQLQKAMKETKGMISLKVIPNQQSRLPALQMFMRAQFDYDPKKDNLIPCKEAGLKFATGDIIQIINKDDSNWWQGRVEGSSKESAGLIPSPELQEWRVASIAQSAPSEAPSCSPFGKKKKYKDKYLAKHSSIFDQLDVVSYEEVVRLPAFKRKTLVLIGASGVGRSHIKNALLSQNPEKFVYPAPYTTRPPRKSEEDGKEYHFISTEEMTRNISANEFLEFGSYQGNMFGTKFETVHQIHKQDKIAILDIEPQTLKIVRTAELSPFIVFIAPTDQGTQTEALQQLQKDSEAIRSQYAHYFDLSLVNNSVDETLKKLQEAFDQACSSPQWVPVSWVY.

Threonine 2 is subject to N-acetylthreonine. A phosphoserine mark is found at serine 13 and serine 19. Threonine 49 is modified (phosphothreonine). 3 positions are modified to phosphoserine: serine 52, serine 57, and serine 110. The region spanning 71 to 152 (LIQIEKVTEE…MISLKVIPNQ (82 aa)) is the PDZ domain. An SH3 domain is found at 158–228 (ALQMFMRAQF…PSPELQEWRV (71 aa)). Residue serine 243 is modified to Phosphoserine. An interaction with PALS1 region spans residues 268–466 (VVSYEEVVRL…PQWVPVSWVY (199 aa)). The region spanning 282–451 (RKTLVLIGAS…TLKKLQEAFD (170 aa)) is the Guanylate kinase-like domain.

This sequence belongs to the MAGUK family. Heterodimer with PALS1. Interacts with DLG5 and NF2. Interacts (via guanylate kinase-like domain) with WHRN (via third PDZ domain). Post-translationally, palmitoylated.

Its subcellular location is the cell membrane. The protein localises to the cell projection. It localises to the stereocilium. In terms of biological role, essential regulator of neutrophil polarity. Regulates neutrophil polarization by regulating AKT1 phosphorylation through a mechanism that is independent of PIK3CG activity. The sequence is that of 55 kDa erythrocyte membrane protein (MPP1) from Papio anubis (Olive baboon).